A 394-amino-acid polypeptide reads, in one-letter code: Argininosuccinate synthase (394 aa).

ATP-binding positions include 7-15 (AYSGGLDTS) and Ala35. Tyr85 is a binding site for L-citrulline. Gly115 serves as a coordination point for ATP. Thr117, Asn121, and Asp122 together coordinate L-aspartate. Residue Asn121 coordinates L-citrulline. L-citrulline is bound by residues Arg125, Ser174, Ser183, Glu258, and Tyr270.

Belongs to the argininosuccinate synthase family. Type 1 subfamily. As to quaternary structure, homotetramer.

Its subcellular location is the cytoplasm. The catalysed reaction is L-citrulline + L-aspartate + ATP = 2-(N(omega)-L-arginino)succinate + AMP + diphosphate + H(+). It functions in the pathway amino-acid biosynthesis; L-arginine biosynthesis; L-arginine from L-ornithine and carbamoyl phosphate: step 2/3. The polypeptide is Argininosuccinate synthase (Methanopyrus kandleri (strain AV19 / DSM 6324 / JCM 9639 / NBRC 100938)).